The sequence spans 148 residues: 2S seed storage protein 1 (148 aa).

Residues 1–19 (MARFTIVLAVLFAAALVSA) form the signal peptide. Residues 20-38 (SAHKTVVTTSVAEEGEEEN) constitute a propeptide that is removed on maturation. An involved in IgE-binding region spans residues 24–94 (TVVTTSVAEE…ECCNELRDVK (71 aa)). 4 disulfides stabilise this stretch: Cys42–Cys97, Cys54–Cys86, Cys87–Cys133, and Cys99–Cys141. Immunodominant epitope; binds to IgE of 14 patients out of 15 tested stretches follow at residues 46-55 (SRQCQMRHCM), 48-57 (QCQMRHCMQW), and 76-86 (NQGQFEHFREC). Positions 69-76 (FLRSAEAN) are excised as a propeptide. The propeptide occupies 147-148 (FA).

This sequence belongs to the 2S seed storage albumins family. In terms of assembly, the mature protein consists of a small and a large chain linked by disulfide bonds. In terms of tissue distribution, expressed in seeds (at protein level).

Its function is as follows. Seed storage protein. The sequence is that of 2S seed storage protein 1 from Sesamum indicum (Oriental sesame).